The following is a 235-amino-acid chain: Calcium-activated potassium channel subunit beta-2 (235 aa).

The tract at residues 1–45 (MFIWTSGRTSSSYRHDEKRNIYQKIRDHDLLDKRKTVTALKAGED) is ball and chain. Topologically, residues 1-46 (MFIWTSGRTSSSYRHDEKRNIYQKIRDHDLLDKRKTVTALKAGEDR) are cytoplasmic. Residues 47-67 (AILLGLAMMVCSIMMYFLLGI) form a helical membrane-spanning segment. The Extracellular segment spans residues 68–194 (TLLRSYMQSV…VILTKLYSSN (127 aa)). N88, N96, and N119 each carry an N-linked (GlcNAc...) asparagine glycan. Residues 195-215 (VLFHSLFWPTCMMAGGVAIVA) form a helical membrane-spanning segment. Residues 216-235 (MVKLTQYLSLLCERIQRINR) are Cytoplasmic-facing.

It belongs to the KCNMB (TC 8.A.14.1) family. KCNMB2 subfamily. As to quaternary structure, interacts with KCNMA1 tetramer. There are probably 4 molecules of KCMNB2 per KCNMA1 tetramer. In terms of processing, N-glycosylated. Highly expressed in brain and heart. Also expressed in lung.

The protein resides in the membrane. Functionally, regulatory subunit of the calcium activated potassium KCNMA1 (maxiK) channel. Modulates the calcium sensitivity and gating kinetics of KCNMA1, thereby contributing to KCNMA1 channel diversity. Acts as a negative regulator that confers rapid and complete inactivation of KCNMA1 channel complex. The polypeptide is Calcium-activated potassium channel subunit beta-2 (Kcnmb2) (Rattus norvegicus (Rat)).